The chain runs to 323 residues: MISPSFRKGMLKERVMDLASQTTILPLLFGCLGIFSLFRLLQRIRSKAYLRNAVVVVTGATSGLGRECAKVFHAAGAKLVLCGRNVKALEELSRELAGSSQGQTHQPFVVTFDLADPGTIAAAAAEILQCFGYVDVLINNAGISYRGTISDTIVDVDRKVMEINYFGPVALTKALLPSMVERKQGHIVAISSIQGKISIPFRSAYSASKHATQAFFDCLRAEMEEANIKVTVISPGYIHTNLSVNAVTADGSRYGALDKNTAQGRSAAEVAQDVFDAVGKKKKDVLLTDFVPSMAVYIRTLAPGLFFRIMASRARKERKSKSS.

The Cytoplasmic portion of the chain corresponds to 1–17 (MISPSFRKGMLKERVMD). A helical; Signal-anchor for type II membrane protein transmembrane segment spans residues 18–38 (LASQTTILPLLFGCLGIFSLF). At 39–323 (RLLQRIRSKA…ARKERKSKSS (285 aa)) the chain is on the lumenal side. Residues S62 and L64 each coordinate NAD(+). S192 serves as a coordination point for substrate. NAD(+)-binding residues include Y205, K209, and T240. The active-site Proton acceptor is Y205.

It belongs to the short-chain dehydrogenases/reductases (SDR) family.

The protein resides in the endoplasmic reticulum membrane. Its function is as follows. Putative oxidoreductase. The protein is Dehydrogenase/reductase SDR family member 7B of Mus musculus (Mouse).